The sequence spans 423 residues: Serine--tRNA ligase (423 aa).

Residue Thr-229–Glu-231 coordinates L-serine. Arg-258 to Glu-260 is a binding site for ATP. Glu-281 provides a ligand contact to L-serine. Glu-345–Ser-348 contributes to the ATP binding site. Ser-379 contacts L-serine.

Belongs to the class-II aminoacyl-tRNA synthetase family. Type-1 seryl-tRNA synthetase subfamily. In terms of assembly, homodimer. The tRNA molecule binds across the dimer.

The protein localises to the cytoplasm. The catalysed reaction is tRNA(Ser) + L-serine + ATP = L-seryl-tRNA(Ser) + AMP + diphosphate + H(+). The enzyme catalyses tRNA(Sec) + L-serine + ATP = L-seryl-tRNA(Sec) + AMP + diphosphate + H(+). Its pathway is aminoacyl-tRNA biosynthesis; selenocysteinyl-tRNA(Sec) biosynthesis; L-seryl-tRNA(Sec) from L-serine and tRNA(Sec): step 1/1. In terms of biological role, catalyzes the attachment of serine to tRNA(Ser). Is also able to aminoacylate tRNA(Sec) with serine, to form the misacylated tRNA L-seryl-tRNA(Sec), which will be further converted into selenocysteinyl-tRNA(Sec). This chain is Serine--tRNA ligase (serS1), found in Methanosarcina barkeri (strain Fusaro / DSM 804).